The sequence spans 232 residues: Ion-translocating oxidoreductase complex subunit E (232 aa).

6 consecutive transmembrane segments (helical) span residues 18–38, 39–59, 69–89, 93–113, 127–147, and 182–202; these read GLVQ…LTNA, IGLG…VSLV, IPVF…LINA, GLYL…VIIG, AAFD…LLGA, and NFLL…LIAI.

It belongs to the NqrDE/RnfAE family. The complex is composed of six subunits: RnfA, RnfB, RnfC, RnfD, RnfE and RnfG.

The protein localises to the cell inner membrane. In terms of biological role, part of a membrane-bound complex that couples electron transfer with translocation of ions across the membrane. This is Ion-translocating oxidoreductase complex subunit E from Shewanella loihica (strain ATCC BAA-1088 / PV-4).